Reading from the N-terminus, the 431-residue chain is Trigger factor (431 aa).

Positions 163–248 (GDTVVIDYAG…IHEVKGKELP (86 aa)) constitute a PPIase FKBP-type domain.

It belongs to the FKBP-type PPIase family. Tig subfamily.

It is found in the cytoplasm. The catalysed reaction is [protein]-peptidylproline (omega=180) = [protein]-peptidylproline (omega=0). In terms of biological role, involved in protein export. Acts as a chaperone by maintaining the newly synthesized protein in an open conformation. Functions as a peptidyl-prolyl cis-trans isomerase. This chain is Trigger factor, found in Latilactobacillus sakei subsp. sakei (strain 23K) (Lactobacillus sakei subsp. sakei).